Reading from the N-terminus, the 253-residue chain is Pupal cuticle protein (253 aa).

The N-terminal stretch at 1–18 (MKSMIVVACLALACGAHA) is a signal peptide. Over residues 54 to 66 (LQQASKNNPNPND) the composition is skewed to polar residues. The interval 54–74 (LQQASKNNPNPNDDGSYDPRW) is disordered. Tandem repeats lie at residues 97 to 100 (AAPA), 115 to 118 (AAPA), and 154 to 157 (AAPA). Positions 155–167 (APAQQQWNAPAHQ) are enriched in low complexity. 2 disordered regions span residues 155–178 (APAQ…QDWN) and 187–206 (APAH…APAH). Residues 189–201 (AHQSWNGAPSWQS) are compositionally biased toward polar residues.

In terms of biological role, component of the cuticle of the pupae of silk moth. This is Pupal cuticle protein (PCP) from Bombyx mori (Silk moth).